The sequence spans 250 residues: MADS-box transcription factor 47 (250 aa).

The segment covering 1-10 (MAGGGGGGGR) has biased composition (gly residues). Disordered stretches follow at residues 1–20 (MAGG…AATG) and 196–250 (SRME…FSSK). Basic and acidic residues predominate over residues 11–20 (GEGEGRAATG). One can recognise an MADS-box domain in the interval 20–80 (GKRERIAIRR…GKLFQFASTS (61 aa)). In terms of domain architecture, K-box spans 106-198 (QGEDSSTCAR…QLQVSRMSRM (93 aa)). Residues 214 to 224 (GQSSESVTNAS) show a composition bias toward polar residues.

As to quaternary structure, may interact with MADS18. Expressed in roots, shoots and developing panicles. Expressed in mature stems and leaves, flowering panicles, developing seeds, and mature seeds.

The protein localises to the nucleus. Transcription factor that modulates expressions of multiple genes involved in cell signaling and gene transcription. Plays a negative regulatory role in brassinosteroid signaling. This is MADS-box transcription factor 47 from Oryza sativa subsp. japonica (Rice).